The following is a 547-amino-acid chain: Methionine--tRNA ligase (547 aa).

Positions 13-23 (PYANGPLHIGH) match the 'HIGH' region motif. Cysteine 145, cysteine 148, cysteine 158, and cysteine 161 together coordinate Zn(2+). Residues 334–338 (QFSKS) carry the 'KMSKS' region motif. Lysine 337 is a binding site for ATP.

It belongs to the class-I aminoacyl-tRNA synthetase family. MetG type 1 subfamily. The cofactor is Zn(2+).

It localises to the cytoplasm. It carries out the reaction tRNA(Met) + L-methionine + ATP = L-methionyl-tRNA(Met) + AMP + diphosphate. In terms of biological role, is required not only for elongation of protein synthesis but also for the initiation of all mRNA translation through initiator tRNA(fMet) aminoacylation. In Thermoplasma acidophilum (strain ATCC 25905 / DSM 1728 / JCM 9062 / NBRC 15155 / AMRC-C165), this protein is Methionine--tRNA ligase.